The chain runs to 328 residues: tRNA-modifying protein YgfZ (328 aa).

Residues W28 and W190 each contribute to the folate site.

It belongs to the tRNA-modifying YgfZ family.

The protein resides in the cytoplasm. In terms of biological role, folate-binding protein involved in regulating the level of ATP-DnaA and in the modification of some tRNAs. It is probably a key factor in regulatory networks that act via tRNA modification, such as initiation of chromosomal replication. This Sodalis glossinidius (strain morsitans) protein is tRNA-modifying protein YgfZ.